Here is an 85-residue protein sequence, read N- to C-terminus: Beta-insect depressant toxin Lqh-dprIT3e (85 aa).

Positions M1–A21 are cleaved as a signal peptide. An LCN-type CS-alpha/beta domain is found at D22–G82. 4 cysteine pairs are disulfide-bonded: C31/C81, C35/C56, C42/C63, and C46/C65. Residue G82 is modified to Glycine amide.

The protein belongs to the long (4 C-C) scorpion toxin superfamily. Sodium channel inhibitor family. Beta subfamily. Expressed by the venom gland.

It is found in the secreted. Depressant insect beta-toxins cause a transient contraction paralysis followed by a slow flaccid paralysis. They bind voltage-independently at site-4 of sodium channels (Nav) and block action potentials, primarily by depolarizing the axonal membrane and suppressing the sodium current. This depressant toxin is active only on insects. It is found in a relatively small amount in the venom. The protein is Beta-insect depressant toxin Lqh-dprIT3e of Leiurus hebraeus (Hebrew deathstalker scorpion).